A 212-amino-acid polypeptide reads, in one-letter code: uncharacterized protein (212 aa).

2 residues coordinate S-adenosyl-L-methionine: Gly53 and Glu74.

It belongs to the methyltransferase superfamily. YrrT family.

In terms of biological role, could be a S-adenosyl-L-methionine-dependent methyltransferase. This is an uncharacterized protein from Exiguobacterium sibiricum (strain DSM 17290 / CCUG 55495 / CIP 109462 / JCM 13490 / 255-15).